The primary structure comprises 299 residues: Pyridoxal 5'-phosphate synthase subunit PdxS (299 aa).

Residue Asp-24 coordinates D-ribose 5-phosphate. Lys-81 (schiff-base intermediate with D-ribose 5-phosphate) is an active-site residue. Gly-153 is a binding site for D-ribose 5-phosphate. Arg-165 lines the D-glyceraldehyde 3-phosphate pocket. D-ribose 5-phosphate-binding positions include Gly-219 and 240-241; that span reads GS.

Belongs to the PdxS/SNZ family. In the presence of PdxT, forms a dodecamer of heterodimers.

It catalyses the reaction aldehydo-D-ribose 5-phosphate + D-glyceraldehyde 3-phosphate + L-glutamine = pyridoxal 5'-phosphate + L-glutamate + phosphate + 3 H2O + H(+). It participates in cofactor biosynthesis; pyridoxal 5'-phosphate biosynthesis. In terms of biological role, catalyzes the formation of pyridoxal 5'-phosphate from ribose 5-phosphate (RBP), glyceraldehyde 3-phosphate (G3P) and ammonia. The ammonia is provided by the PdxT subunit. Can also use ribulose 5-phosphate and dihydroxyacetone phosphate as substrates, resulting from enzyme-catalyzed isomerization of RBP and G3P, respectively. This is Pyridoxal 5'-phosphate synthase subunit PdxS from Methanococcus maripaludis (strain C5 / ATCC BAA-1333).